The sequence spans 679 residues: tRNA uridine 5-carboxymethylaminomethyl modification enzyme MnmG (679 aa).

Residue G13–G18 participates in FAD binding. G280–F294 lines the NAD(+) pocket.

Belongs to the MnmG family. As to quaternary structure, homodimer. Heterotetramer of two MnmE and two MnmG subunits. The cofactor is FAD.

The protein localises to the cytoplasm. Its function is as follows. NAD-binding protein involved in the addition of a carboxymethylaminomethyl (cmnm) group at the wobble position (U34) of certain tRNAs, forming tRNA-cmnm(5)s(2)U34. The chain is tRNA uridine 5-carboxymethylaminomethyl modification enzyme MnmG from Albidiferax ferrireducens (strain ATCC BAA-621 / DSM 15236 / T118) (Rhodoferax ferrireducens).